The primary structure comprises 229 residues: Potassium/proton antiporter CemA (229 aa).

Helical transmembrane passes span 7–27 (FTPL…SLLF), 107–127 (ILHF…SILG), and 189–209 (IISG…KYWI).

It belongs to the CemA family.

It localises to the plastid. Its subcellular location is the chloroplast inner membrane. It carries out the reaction K(+)(in) + H(+)(out) = K(+)(out) + H(+)(in). Its function is as follows. Contributes to K(+)/H(+) antiport activity by supporting proton efflux to control proton extrusion and homeostasis in chloroplasts in a light-dependent manner to modulate photosynthesis. Prevents excessive induction of non-photochemical quenching (NPQ) under continuous-light conditions. Indirectly promotes efficient inorganic carbon uptake into chloroplasts. This Helianthus annuus (Common sunflower) protein is Potassium/proton antiporter CemA.